The sequence spans 245 residues: 3-deoxy-manno-octulosonate cytidylyltransferase (245 aa).

This sequence belongs to the KdsB family.

It is found in the cytoplasm. It carries out the reaction 3-deoxy-alpha-D-manno-oct-2-ulosonate + CTP = CMP-3-deoxy-beta-D-manno-octulosonate + diphosphate. It functions in the pathway nucleotide-sugar biosynthesis; CMP-3-deoxy-D-manno-octulosonate biosynthesis; CMP-3-deoxy-D-manno-octulosonate from 3-deoxy-D-manno-octulosonate and CTP: step 1/1. It participates in bacterial outer membrane biogenesis; lipopolysaccharide biosynthesis. Functionally, activates KDO (a required 8-carbon sugar) for incorporation into bacterial lipopolysaccharide in Gram-negative bacteria. This Rhodopseudomonas palustris (strain BisB18) protein is 3-deoxy-manno-octulosonate cytidylyltransferase.